A 177-amino-acid chain; its full sequence is Ribulose bisphosphate carboxylase small subunit, chloroplastic (177 aa).

A chloroplast-targeting transit peptide spans 1 to 55; it reads MASLMSNAAVVTASTAAQANMVAPFSGLKSTSAFPVSRKSNVDITSLATNGGRVN.

Belongs to the RuBisCO small chain family. Heterohexadecamer of 8 large and 8 small subunits.

Its subcellular location is the plastid. It localises to the chloroplast. In terms of biological role, ruBisCO catalyzes two reactions: the carboxylation of D-ribulose 1,5-bisphosphate, the primary event in carbon dioxide fixation, as well as the oxidative fragmentation of the pentose substrate. Both reactions occur simultaneously and in competition at the same active site. Although the small subunit is not catalytic it is essential for maximal activity. The sequence is that of Ribulose bisphosphate carboxylase small subunit, chloroplastic from Silene latifolia subsp. alba (White campion).